The primary structure comprises 188 residues: ATP synthase subunit b (188 aa).

The chain crosses the membrane as a helical span at residues 21-41 (ILPHLGELIVGIIFAIIIYAV).

This sequence belongs to the ATPase B chain family. F-type ATPases have 2 components, F(1) - the catalytic core - and F(0) - the membrane proton channel. F(1) has five subunits: alpha(3), beta(3), gamma(1), delta(1), epsilon(1). F(0) has three main subunits: a(1), b(2) and c(10-14). The alpha and beta chains form an alternating ring which encloses part of the gamma chain. F(1) is attached to F(0) by a central stalk formed by the gamma and epsilon chains, while a peripheral stalk is formed by the delta and b chains.

Its subcellular location is the cell membrane. F(1)F(0) ATP synthase produces ATP from ADP in the presence of a proton or sodium gradient. F-type ATPases consist of two structural domains, F(1) containing the extramembraneous catalytic core and F(0) containing the membrane proton channel, linked together by a central stalk and a peripheral stalk. During catalysis, ATP synthesis in the catalytic domain of F(1) is coupled via a rotary mechanism of the central stalk subunits to proton translocation. Its function is as follows. Component of the F(0) channel, it forms part of the peripheral stalk, linking F(1) to F(0). The polypeptide is ATP synthase subunit b (Kineococcus radiotolerans (strain ATCC BAA-149 / DSM 14245 / SRS30216)).